The primary structure comprises 142 residues: Hemoglobin subunit alpha (142 aa).

The Globin domain maps to Val-2–Arg-142. Ser-4 bears the Phosphoserine mark. Lys-8 carries the post-translational modification N6-succinyllysine. Thr-9 carries the post-translational modification Phosphothreonine. At Lys-12 the chain carries N6-succinyllysine. Lys-17 carries the post-translational modification N6-acetyllysine; alternate. An N6-succinyllysine; alternate modification is found at Lys-17. Phosphotyrosine is present on Tyr-25. The residue at position 36 (Ser-36) is a Phosphoserine. Lys-41 carries the post-translational modification N6-succinyllysine. Position 50 is a phosphoserine (Ser-50). His-59 contributes to the O2 binding site. His-88 provides a ligand contact to heme b. Ser-103 bears the Phosphoserine mark. Phosphothreonine is present on Thr-109. Phosphoserine occurs at positions 125 and 132. 2 positions are modified to phosphothreonine: Thr-135 and Thr-138. Residue Ser-139 is modified to Phosphoserine.

It belongs to the globin family. As to quaternary structure, heterotetramer of two alpha chains and two beta chains. Red blood cells.

In terms of biological role, involved in oxygen transport from the lung to the various peripheral tissues. Hemopressin acts as an antagonist peptide of the cannabinoid receptor CNR1. Hemopressin-binding efficiently blocks cannabinoid receptor CNR1 and subsequent signaling. This is Hemoglobin subunit alpha (HBA) from Sapajus apella (Brown-capped capuchin).